Here is a 226-residue protein sequence, read N- to C-terminus: Phosphoribosylformylglycinamidine synthase subunit PurQ (226 aa).

The Glutamine amidotransferase type-1 domain maps to 4 to 226 (RIGVVTFPGS…TSILKKLVNA (223 aa)). The Nucleophile role is filled by C87. Catalysis depends on residues H196 and E198.

As to quaternary structure, part of the FGAM synthase complex composed of 1 PurL, 1 PurQ and 2 PurS subunits.

The protein localises to the cytoplasm. It catalyses the reaction N(2)-formyl-N(1)-(5-phospho-beta-D-ribosyl)glycinamide + L-glutamine + ATP + H2O = 2-formamido-N(1)-(5-O-phospho-beta-D-ribosyl)acetamidine + L-glutamate + ADP + phosphate + H(+). The enzyme catalyses L-glutamine + H2O = L-glutamate + NH4(+). The protein operates within purine metabolism; IMP biosynthesis via de novo pathway; 5-amino-1-(5-phospho-D-ribosyl)imidazole from N(2)-formyl-N(1)-(5-phospho-D-ribosyl)glycinamide: step 1/2. Its function is as follows. Part of the phosphoribosylformylglycinamidine synthase complex involved in the purines biosynthetic pathway. Catalyzes the ATP-dependent conversion of formylglycinamide ribonucleotide (FGAR) and glutamine to yield formylglycinamidine ribonucleotide (FGAM) and glutamate. The FGAM synthase complex is composed of three subunits. PurQ produces an ammonia molecule by converting glutamine to glutamate. PurL transfers the ammonia molecule to FGAR to form FGAM in an ATP-dependent manner. PurS interacts with PurQ and PurL and is thought to assist in the transfer of the ammonia molecule from PurQ to PurL. This Streptomyces coelicolor (strain ATCC BAA-471 / A3(2) / M145) protein is Phosphoribosylformylglycinamidine synthase subunit PurQ.